A 170-amino-acid chain; its full sequence is Elicitin-like protein 1 (170 aa).

An N-terminal signal peptide occupies residues 1 to 19 (MFSKTLVVLAAVAAVTVNG). 3 disulfides stabilise this stretch: Cys-25-Cys-91, Cys-47-Cys-76, and Cys-71-Cys-118. Residues 122–170 (GGGSTPTTAPPTSTTPTTAPPTGTTPTTAPPAGTTPGVTPSPTTPKPAC) form a disordered region. Low complexity predominate over residues 126–162 (TPTTAPPTSTTPTTAPPTGTTPTTAPPAGTTPGVTPS).

It belongs to the elicitin family.

Its subcellular location is the secreted. Functionally, induces local and distal defense responses (incompatible hypersensitive reaction) in plants from the solanaceae and cruciferae families. Elicits leaf necrosis and causes the accumulation of pathogenesis-related proteins. Might interact with the lipidic molecules of the plasma membrane. This is Elicitin-like protein 1 (POD-1) from Pythium oligandrum (Mycoparasitic fungus).